Reading from the N-terminus, the 387-residue chain is 3-ketoacyl-CoA thiolase FadA (387 aa).

Catalysis depends on Cys91, which acts as the Acyl-thioester intermediate. Catalysis depends on proton acceptor residues His343 and Cys373.

It belongs to the thiolase-like superfamily. Thiolase family. In terms of assembly, heterotetramer of two alpha chains (FadB) and two beta chains (FadA).

The protein localises to the cytoplasm. The enzyme catalyses an acyl-CoA + acetyl-CoA = a 3-oxoacyl-CoA + CoA. It functions in the pathway lipid metabolism; fatty acid beta-oxidation. Its function is as follows. Catalyzes the final step of fatty acid oxidation in which acetyl-CoA is released and the CoA ester of a fatty acid two carbons shorter is formed. Involved in the aerobic and anaerobic degradation of long-chain fatty acids. This chain is 3-ketoacyl-CoA thiolase FadA (fadA), found in Escherichia coli (strain K12).